Here is a 298-residue protein sequence, read N- to C-terminus: Mitochondrial dicarboxylate/tricarboxylate transporter DTC (298 aa).

3 Solcar repeats span residues 12 to 93 (WTTV…LTAK), 103 to 194 (LPLY…SAEY), and 202 to 292 (GEMS…ITKF). 6 helical membrane-spanning segments follow: residues 18 to 38 (FVNGGASGMLATCVIQPIDMI), 68 to 88 (GLSAGLLRQATYTTARLGSFK), 109 to 129 (ALCGLTAGAIGACVGSPADLA), 169 to 189 (GCGPTVVRAMALNMGMLASYD), 208 to 228 (VGASAVSGFCAAACSLPFDFV), and 268 to 288 (FPVYCVRIAPHVMMTWIFLNQ).

This sequence belongs to the mitochondrial carrier (TC 2.A.29) family. As to expression, highly expressed in flower buds and at lower levels in roots, leaves and stems.

The protein localises to the mitochondrion inner membrane. Catalyzes the transport of dicarboxylates, such as oxoglutarate, oxaloacetate, malate, and succinate, and of tricarboxylates, such as citrate, isocitrate, cis-aconitate, and trans-aconitate by a counter-exchange mechanism across the inner mitochondrial membrane. Substrate preference in reconstituted proteoliposomes is oxaloacetate &gt; malonate &gt; malate &gt; maleate &gt; succinate &gt; oxoglutarate &gt; citrate &gt; trans-aconitate &gt; cis-aconitate &gt; sulfate &gt; isocitrate. May be important for plant metabolic functions requiring organic acid flux to or from the mitochondria, such as nitrogen assimilation, export of reducing equivalents from the mitochondria, and fatty acid elongation. The polypeptide is Mitochondrial dicarboxylate/tricarboxylate transporter DTC (DTC) (Arabidopsis thaliana (Mouse-ear cress)).